We begin with the raw amino-acid sequence, 113 residues long: UPF0122 protein Sez_1013 (113 aa).

This sequence belongs to the UPF0122 family.

In terms of biological role, might take part in the signal recognition particle (SRP) pathway. This is inferred from the conservation of its genetic proximity to ftsY/ffh. May be a regulatory protein. The sequence is that of UPF0122 protein Sez_1013 from Streptococcus equi subsp. zooepidemicus (strain MGCS10565).